The following is a 200-amino-acid chain: Small ribosomal subunit protein uS4 (200 aa).

Residues 22–41 (TGKEIEKRPYAPGQHGPNQR) are disordered. In terms of domain architecture, S4 RNA-binding spans 92 to 152 (TRLDNLVYRL…EKSQNLAVVG (61 aa)).

Belongs to the universal ribosomal protein uS4 family. In terms of assembly, part of the 30S ribosomal subunit. Contacts protein S5. The interaction surface between S4 and S5 is involved in control of translational fidelity.

In terms of biological role, one of the primary rRNA binding proteins, it binds directly to 16S rRNA where it nucleates assembly of the body of the 30S subunit. Its function is as follows. With S5 and S12 plays an important role in translational accuracy. The chain is Small ribosomal subunit protein uS4 from Lysinibacillus sphaericus (strain C3-41).